The following is a 547-amino-acid chain: Phenylalanine--tRNA ligase beta subunit (547 aa).

The region spanning 269–344 (LDVRFMEVDV…IGYGYENITP (76 aa)) is the B5 domain. 4 residues coordinate Mg(2+): aspartate 322, aspartate 328, glutamate 331, and aspartate 332.

Belongs to the phenylalanyl-tRNA synthetase beta subunit family. Type 2 subfamily. As to quaternary structure, tetramer of two alpha and two beta subunits. It depends on Mg(2+) as a cofactor.

It is found in the cytoplasm. It carries out the reaction tRNA(Phe) + L-phenylalanine + ATP = L-phenylalanyl-tRNA(Phe) + AMP + diphosphate + H(+). The chain is Phenylalanine--tRNA ligase beta subunit from Archaeoglobus fulgidus (strain ATCC 49558 / DSM 4304 / JCM 9628 / NBRC 100126 / VC-16).